A 25-amino-acid polypeptide reads, in one-letter code: Zinc metalloproteinase-disintegrin-like daborhagin-M (25 aa).

The Peptidase M12B domain maps to 14-25 (SYVELIITVDHS). Ca(2+) is bound at residue Glu17.

This sequence belongs to the venom metalloproteinase (M12B) family. P-III subfamily. P-IIIa sub-subfamily. Monomer. Requires Zn(2+) as cofactor. Post-translationally, N-glycosylated. Contains 16 disulfide bonds. Expressed by the venom gland.

It is found in the secreted. Its activity is regulated as follows. Inhibited by EDTA, EGTA and 1,10-phenanthroline. Addition of Mg(2+) or Ca(2+) increases the casein hydrolysis rate. In terms of biological role, snake venom zinc metalloprotease that possesses high hemorrhagic activity (minimum hemorrhagic dose, MHD=0.86 ug) when subcutaneously injected into mice. Has potent fibrinogenolytic activity on alpha-chain of fibrinogen (FGA). Hydrolyzes model substrate (beta-chain of insulin) at Ala(14)-Leu(15) and Tyr(16)-Leu(17) followed by His(10)-Leu(11) and Phe(24)-Phe(25). The polypeptide is Zinc metalloproteinase-disintegrin-like daborhagin-M (Daboia siamensis (Eastern Russel's viper)).